A 449-amino-acid chain; its full sequence is Delta(8)-fatty-acid desaturase 1 (449 aa).

In terms of domain architecture, Cytochrome b5 heme-binding spans 7–91 (KKYITNEDLK…IRDFQVSEVS (85 aa)). H42 and H65 together coordinate heme. 2 helical membrane passes run 113–133 (VTLY…YGVL) and 138–158 (VFAH…SAYI). The short motif at 160–164 (HDSGH) is the Histidine box-1 element. The chain crosses the membrane as a helical span at residues 173–195 (YNRFAQLLSGNCLTGISIAWWKW). A Histidine box-2 motif is present at residues 197–201 (HNAHH). Helical transmembrane passes span 255–275 (YYPV…LLLF), 284–304 (ALNF…VSCL), and 311–331 (FFFV…FTLN). The short motif at 374 to 378 (QLEHH) is the Histidine box-3 element.

It belongs to the fatty acid desaturase type 1 family. Requires Fe cation as cofactor. In terms of tissue distribution, highly expressed in flowers. Expressed in roots, leaves, stems and siliques.

It is found in the endoplasmic reticulum membrane. It catalyses the reaction an N-acyl-(4R)-4-hydroxysphinganine + 2 Fe(II)-[cytochrome b5] + O2 + 2 H(+) = a (4R,8E)-4-hydroxysphingenine ceramide + 2 Fe(III)-[cytochrome b5] + 2 H2O. It carries out the reaction an N-acyl-(4R)-4-hydroxysphinganine + 2 Fe(II)-[cytochrome b5] + O2 + 2 H(+) = a (4R,8Z)-4-hydroxysphing-8-enine ceramide + 2 Fe(III)-[cytochrome b5] + 2 H2O. Its function is as follows. Plays a major role as delta(8)-fatty-acid desaturase which introduces a double bond at the 8-position in the long-chain base (LCB) of ceramides with or without a hydroxy group at the 4-position. The enzyme produces both the 8E and 8Z isomers (in a 4:1 ratio). This structural modification contributes to the quantitative partitioning of ceramides between the two major sphingolipid classes, glucosylceramides and glycosylinositolphosphoryl ceramides. Sphingolipids are important membrane components involved in environmental stress responses, such as resistance to chilling, and act as cell signaling molecules. This is Delta(8)-fatty-acid desaturase 1 (SLD1) from Arabidopsis thaliana (Mouse-ear cress).